A 340-amino-acid polypeptide reads, in one-letter code: Coproporphyrin III ferrochelatase (340 aa).

Ser-52 and Tyr-121 together coordinate Fe-coproporphyrin III. 2 residues coordinate Fe(2+): His-177 and Glu-260.

It belongs to the ferrochelatase family.

The protein resides in the cytoplasm. The enzyme catalyses Fe-coproporphyrin III + 2 H(+) = coproporphyrin III + Fe(2+). It functions in the pathway porphyrin-containing compound metabolism; protoheme biosynthesis. In terms of biological role, involved in coproporphyrin-dependent heme b biosynthesis. Catalyzes the insertion of ferrous iron into coproporphyrin III to form Fe-coproporphyrin III. This chain is Coproporphyrin III ferrochelatase, found in Mycobacteroides abscessus (strain ATCC 19977 / DSM 44196 / CCUG 20993 / CIP 104536 / JCM 13569 / NCTC 13031 / TMC 1543 / L948) (Mycobacterium abscessus).